A 283-amino-acid polypeptide reads, in one-letter code: Gap junction alpha-6 protein (283 aa).

The Cytoplasmic portion of the chain corresponds to 1-23 (MSDWSALHQLLEKVQPYSTAGGK). The helical transmembrane segment at 24–41 (VWIKVLFIFRILLLGTAI) threads the bilayer. Over 42 to 76 (ESAWSDEQFEFHCNTQQPGCENVCYDHAFPISHVR) the chain is Extracellular. A helical membrane pass occupies residues 77-99 (LWVLQVIFVSVPILLYLAHVYYV). The Cytoplasmic portion of the chain corresponds to 100–150 (VRQNKKLNKQEEELEAAHFNEASVERHLETIAGEQFKCGSEEQSKVKMRGR). Residues 151-173 (LLLTYMASIFFKSVFEMAFLLIQ) traverse the membrane as a helical segment. At 174-208 (WYIYGFTLSALYICEQSPCPRRVDCFLSRPTEKTI) the chain is on the extracellular side. The helical transmembrane segment at 209–231 (FILFMFVVSVVSFVLDIIELFYV) threads the bilayer. At 232–283 (LFKAIKNRMRKAEDEVYCDELPCPSHVSSSTVLTTIDSSEQAVPVELSSVCI) the chain is on the cytoplasmic side.

This sequence belongs to the connexin family. Alpha-type (group II) subfamily. In terms of assembly, a connexon is composed of a hexamer of connexins.

It is found in the cell membrane. Its subcellular location is the cell junction. The protein localises to the gap junction. Functionally, one gap junction consists of a cluster of closely packed pairs of transmembrane channels, the connexons, through which materials of low MW diffuse from one cell to a neighboring cell. The chain is Gap junction alpha-6 protein (Gja6) from Mus musculus (Mouse).